The following is a 336-amino-acid chain: MPKTETYPRLLADIGGTNARFGLEVASRQIECIEVLRCEDFESLSDAVRFYLSKHQESLKLCPIYGSFAVATPIMGDFVQMTNNHWTFSIETTRQCLGLERLLVVNDFVAQAFAISTMQENDLAQVGGIKCEINAPKAVLGPGTGLGVSTLIQNSDGSLKVLPGEGGHVSFAPFDDLEILVWQYARSKFNHVSAERFLSGSGLVLIYEALSKRKSMEKVAKLSKAELTPQIISERALNGDYPLCRLTLDTFCSMLGTLAADVALTLGARGGVYLCGGIIPRFIDYFKTSPFRARFETKGRMGAFLASIPVHVVLKKTPGLDGVGIALENYLLHDKI.

12-17 (ADIGGT) serves as a coordination point for ATP.

Belongs to the bacterial glucokinase family.

The protein resides in the cytoplasm. It catalyses the reaction D-glucose + ATP = D-glucose 6-phosphate + ADP + H(+). The polypeptide is Glucokinase (Helicobacter acinonychis (strain Sheeba)).